Consider the following 431-residue polypeptide: Trigger factor (431 aa).

In terms of domain architecture, PPIase FKBP-type spans glycine 158–leucine 243.

It belongs to the FKBP-type PPIase family. Tig subfamily.

It localises to the cytoplasm. It carries out the reaction [protein]-peptidylproline (omega=180) = [protein]-peptidylproline (omega=0). Its function is as follows. Involved in protein export. Acts as a chaperone by maintaining the newly synthesized protein in an open conformation. Functions as a peptidyl-prolyl cis-trans isomerase. The protein is Trigger factor (tig) of Xylella fastidiosa (strain 9a5c).